An 86-amino-acid chain; its full sequence is Exodeoxyribonuclease 7 small subunit (86 aa).

Residues 1-26 are disordered; sequence MQDELFETEKAPQKNTKNAKNAPKKS.

It belongs to the XseB family. As to quaternary structure, heterooligomer composed of large and small subunits.

The protein localises to the cytoplasm. It carries out the reaction Exonucleolytic cleavage in either 5'- to 3'- or 3'- to 5'-direction to yield nucleoside 5'-phosphates.. In terms of biological role, bidirectionally degrades single-stranded DNA into large acid-insoluble oligonucleotides, which are then degraded further into small acid-soluble oligonucleotides. This is Exodeoxyribonuclease 7 small subunit from Helicobacter pylori (strain Shi470).